The primary structure comprises 696 residues: Elongation factor G (696 aa).

Residues 8–288 (EDYRNFGIMA…AVVDFLPSPI (281 aa)) enclose the tr-type G domain. GTP contacts are provided by residues 17-24 (AHIDAGKT), 86-90 (DTPGH), and 140-143 (NKMD).

The protein belongs to the TRAFAC class translation factor GTPase superfamily. Classic translation factor GTPase family. EF-G/EF-2 subfamily.

The protein resides in the cytoplasm. In terms of biological role, catalyzes the GTP-dependent ribosomal translocation step during translation elongation. During this step, the ribosome changes from the pre-translocational (PRE) to the post-translocational (POST) state as the newly formed A-site-bound peptidyl-tRNA and P-site-bound deacylated tRNA move to the P and E sites, respectively. Catalyzes the coordinated movement of the two tRNA molecules, the mRNA and conformational changes in the ribosome. The protein is Elongation factor G of Chelativorans sp. (strain BNC1).